The primary structure comprises 89 residues: Small ribosomal subunit protein uS15 (89 aa).

It belongs to the universal ribosomal protein uS15 family. In terms of assembly, part of the 30S ribosomal subunit. Forms a bridge to the 50S subunit in the 70S ribosome, contacting the 23S rRNA.

Functionally, one of the primary rRNA binding proteins, it binds directly to 16S rRNA where it helps nucleate assembly of the platform of the 30S subunit by binding and bridging several RNA helices of the 16S rRNA. Forms an intersubunit bridge (bridge B4) with the 23S rRNA of the 50S subunit in the ribosome. The chain is Small ribosomal subunit protein uS15 from Leuconostoc mesenteroides subsp. mesenteroides (strain ATCC 8293 / DSM 20343 / BCRC 11652 / CCM 1803 / JCM 6124 / NCDO 523 / NBRC 100496 / NCIMB 8023 / NCTC 12954 / NRRL B-1118 / 37Y).